Reading from the N-terminus, the 420-residue chain is Putative T-box protein 33 (420 aa).

The segment at residues L93 to K291 is a DNA-binding region (T-box). The segment covering S395–I412 has biased composition (polar residues). A disordered region spans residues S395–M420.

It localises to the nucleus. The protein is Putative T-box protein 33 (tbx-33) of Caenorhabditis elegans.